The primary structure comprises 1233 residues: Rho guanine nucleotide exchange factor 10-like protein (1233 aa).

Positions methionine 1 to proline 10 are enriched in pro residues. The disordered stretch occupies residues methionine 1–asparagine 93. The segment covering glutamate 26–threonine 46 has biased composition (acidic residues). Serine 40 is modified (phosphoserine). A compositionally biased stretch (low complexity) spans proline 72–alanine 89. Phosphotyrosine occurs at positions 131 and 152. Residues glycine 159–lysine 193 form a disordered region. Over residues glutamate 183 to lysine 193 the composition is skewed to basic and acidic residues. Serine 240 is modified (phosphoserine). Residues valine 275–glutamine 462 form the DH domain. The span at glutamine 1089 to glycine 1104 shows a compositional bias: basic and acidic residues. Disordered regions lie at residues glutamine 1089–arginine 1117 and proline 1140–aspartate 1161.

Interacts with RHOA, RHOB and RHOC.

It is found in the cytoplasm. In terms of biological role, acts as a guanine nucleotide exchange factor (GEF) for RHOA, RHOB and RHOC. The chain is Rho guanine nucleotide exchange factor 10-like protein (ARHGEF10L) from Pongo abelii (Sumatran orangutan).